A 57-amino-acid chain; its full sequence is Potassium channel toxin alpha-KTx 26.1 (57 aa).

Residues 1 to 22 (MSRLFVFILIALFLSAIIDVMS) form the signal peptide. 3 disulfides stabilise this stretch: cysteine 30/cysteine 48, cysteine 34/cysteine 53, and cysteine 38/cysteine 55.

This sequence belongs to the short scorpion toxin superfamily. Potassium channel inhibitor family. Alpha-KTx 26 subfamily. In terms of tissue distribution, expressed by the venom gland.

It localises to the secreted. Functionally, recombinant toxin that reversibly inhibits the potassium current of mKv1.3/KCNA3 channel stably expressed in COS7 cells (IC(50)=150 nM). Also shows a weak inhibition on Kv1.2/KCNA2, Kv1.3/KCNA3 and TRPV1 channels. The chain is Potassium channel toxin alpha-KTx 26.1 from Olivierus martensii (Manchurian scorpion).